We begin with the raw amino-acid sequence, 129 residues long: MSGRGKQGGKARAKAKSRSSRAGLQFPVGRVHRLLRKGNYAERVGAGAPVYLAAVLEYLTAEILELAGNAARDNKKTRIIPRHLQLAIRNDEELNKLLGKVTIAQGGVLPNIQAVLLPKKTDSHKAKAK.

The tract at residues Met-1–Ala-22 is disordered. At Ser-2 the chain carries N-acetylserine. The residue at position 2 (Ser-2) is a Phosphoserine. An N6-(2-hydroxyisobutyryl)lysine modification is found at Lys-6. N6-acetyllysine is present on residues Lys-6 and Lys-10. Over residues Gln-7 to Ser-19 the composition is skewed to basic residues. Lys-10 bears the N6-(2-hydroxyisobutyryl)lysine; alternate mark. N6-lactoyllysine; alternate is present on Lys-10. Lys-10 carries the N6-succinyllysine modification. Glycyl lysine isopeptide (Lys-Gly) (interchain with G-Cter in ubiquitin) cross-links involve residues Lys-14 and Lys-16. At Lys-37 the chain carries N6-(2-hydroxyisobutyryl)lysine; alternate. N6-(2-hydroxyisobutyryl)lysine occurs at positions 75 and 76. Residue Lys-96 is modified to N6-(2-hydroxyisobutyryl)lysine; alternate. Lys-96 is modified (N6-succinyllysine). Lys-96 is subject to N6-glutaryllysine; alternate. The residue at position 100 (Lys-100) is an N6-glutaryllysine. The residue at position 105 (Gln-105) is an N5-methylglutamine. Lys-119 carries the post-translational modification N6-(2-hydroxyisobutyryl)lysine; alternate. Lys-119 and Lys-120 each carry N6-glutaryllysine; alternate. Lys-120 participates in a covalent cross-link: Glycyl lysine isopeptide (Lys-Gly) (interchain with G-Cter in ubiquitin).

Belongs to the histone H2A family. The nucleosome is a histone octamer containing two molecules each of H2A, H2B, H3 and H4 assembled in one H3-H4 heterotetramer and two H2A-H2B heterodimers. The octamer wraps approximately 147 bp of DNA. Post-translationally, monoubiquitination of Lys-120 (H2AK119Ub) gives a specific tag for epigenetic transcriptional repression. Following DNA double-strand breaks (DSBs), it is ubiquitinated through 'Lys-63' linkage of ubiquitin moieties, leading to the recruitment of repair proteins to sites of DNA damage. H2AK119Ub and ionizing radiation-induced 'Lys-63'-linked ubiquitination are distinct events. In terms of processing, phosphorylation on Ser-2 is enhanced during mitosis. Phosphorylation on Ser-2 directly represses transcription. Glutamine methylation at Gln-105 (H2AQ104me) by FBL is specifically dedicated to polymerase I. It is present at 35S ribosomal DNA locus and impairs binding of the FACT complex.

It is found in the nucleus. Its subcellular location is the chromosome. Functionally, core component of nucleosome. Nucleosomes wrap and compact DNA into chromatin, limiting DNA accessibility to the cellular machineries which require DNA as a template. Histones thereby play a central role in transcription regulation, DNA repair, DNA replication and chromosomal stability. DNA accessibility is regulated via a complex set of post-translational modifications of histones, also called histone code, and nucleosome remodeling. The sequence is that of Histone H2A-IV from Gallus gallus (Chicken).